A 422-amino-acid polypeptide reads, in one-letter code: Serine hydroxymethyltransferase (422 aa).

(6S)-5,6,7,8-tetrahydrofolate contacts are provided by residues L118 and 122-124 (GHL). K227 is subject to N6-(pyridoxal phosphate)lysine. (6S)-5,6,7,8-tetrahydrofolate contacts are provided by residues E243 and 351 to 353 (SPF).

The protein belongs to the SHMT family. In terms of assembly, homodimer. Requires pyridoxal 5'-phosphate as cofactor.

The protein resides in the cytoplasm. The catalysed reaction is (6R)-5,10-methylene-5,6,7,8-tetrahydrofolate + glycine + H2O = (6S)-5,6,7,8-tetrahydrofolate + L-serine. Its pathway is one-carbon metabolism; tetrahydrofolate interconversion. It functions in the pathway amino-acid biosynthesis; glycine biosynthesis; glycine from L-serine: step 1/1. Functionally, catalyzes the reversible interconversion of serine and glycine with tetrahydrofolate (THF) serving as the one-carbon carrier. This reaction serves as the major source of one-carbon groups required for the biosynthesis of purines, thymidylate, methionine, and other important biomolecules. Also exhibits THF-independent aldolase activity toward beta-hydroxyamino acids, producing glycine and aldehydes, via a retro-aldol mechanism. The sequence is that of Serine hydroxymethyltransferase from Kosmotoga olearia (strain ATCC BAA-1733 / DSM 21960 / TBF 19.5.1).